Consider the following 574-residue polypeptide: Proline--tRNA ligase (574 aa).

Belongs to the class-II aminoacyl-tRNA synthetase family. ProS type 1 subfamily. Homodimer.

The protein localises to the cytoplasm. It carries out the reaction tRNA(Pro) + L-proline + ATP = L-prolyl-tRNA(Pro) + AMP + diphosphate. Its function is as follows. Catalyzes the attachment of proline to tRNA(Pro) in a two-step reaction: proline is first activated by ATP to form Pro-AMP and then transferred to the acceptor end of tRNA(Pro). As ProRS can inadvertently accommodate and process non-cognate amino acids such as alanine and cysteine, to avoid such errors it has two additional distinct editing activities against alanine. One activity is designated as 'pretransfer' editing and involves the tRNA(Pro)-independent hydrolysis of activated Ala-AMP. The other activity is designated 'posttransfer' editing and involves deacylation of mischarged Ala-tRNA(Pro). The misacylated Cys-tRNA(Pro) is not edited by ProRS. The polypeptide is Proline--tRNA ligase (Hahella chejuensis (strain KCTC 2396)).